Here is a 217-residue protein sequence, read N- to C-terminus: Non-structural protein NS3 (217 aa).

It belongs to the orbivirus NS3 family.

Its function is as follows. May play a role in the release of virions from infected cells. The polypeptide is Non-structural protein NS3 (Segment-10) (African horse sickness virus (AHSV)).